A 285-amino-acid chain; its full sequence is Pantothenate synthetase (285 aa).

32 to 39 (MGALHDGH) is a binding site for ATP. Catalysis depends on His-39, which acts as the Proton donor. Gln-63 provides a ligand contact to (R)-pantoate. Beta-alanine is bound at residue Gln-63. Position 149–152 (149–152 (GEKD)) interacts with ATP. Gln-155 is a binding site for (R)-pantoate. ATP-binding positions include Val-178 and 186-189 (MSSR).

Belongs to the pantothenate synthetase family. Homodimer.

The protein resides in the cytoplasm. The catalysed reaction is (R)-pantoate + beta-alanine + ATP = (R)-pantothenate + AMP + diphosphate + H(+). It participates in cofactor biosynthesis; (R)-pantothenate biosynthesis; (R)-pantothenate from (R)-pantoate and beta-alanine: step 1/1. Its function is as follows. Catalyzes the condensation of pantoate with beta-alanine in an ATP-dependent reaction via a pantoyl-adenylate intermediate. The protein is Pantothenate synthetase of Ruegeria pomeroyi (strain ATCC 700808 / DSM 15171 / DSS-3) (Silicibacter pomeroyi).